The sequence spans 545 residues: CTP synthase (545 aa).

The interval 1–266 is amidoligase domain; sequence MTTNYIFVTG…DDYICKRFSL (266 aa). Residue Ser-14 participates in CTP binding. A UTP-binding site is contributed by Ser-14. ATP is bound by residues 15-20 and Asp-72; that span reads SLGKGI. Mg(2+)-binding residues include Asp-72 and Glu-140. CTP-binding positions include 147 to 149, 187 to 192, and Lys-223; these read DIE and KTKPTQ. Residues 187–192 and Lys-223 each bind UTP; that span reads KTKPTQ. An ATP-binding site is contributed by 239–241; that stretch reads KDV. The Glutamine amidotransferase type-1 domain maps to 291–542; the sequence is NIGMVGKYVE…VKAASEYQKR (252 aa). Gly-352 is a binding site for L-glutamine. The active-site Nucleophile; for glutamine hydrolysis is Cys-379. L-glutamine is bound by residues 380–383, Glu-403, and Arg-470; that span reads LGMQ. Residues His-515 and Glu-517 contribute to the active site.

This sequence belongs to the CTP synthase family. In terms of assembly, homotetramer.

It catalyses the reaction UTP + L-glutamine + ATP + H2O = CTP + L-glutamate + ADP + phosphate + 2 H(+). The enzyme catalyses L-glutamine + H2O = L-glutamate + NH4(+). The catalysed reaction is UTP + NH4(+) + ATP = CTP + ADP + phosphate + 2 H(+). It functions in the pathway pyrimidine metabolism; CTP biosynthesis via de novo pathway; CTP from UDP: step 2/2. With respect to regulation, allosterically activated by GTP, when glutamine is the substrate; GTP has no effect on the reaction when ammonia is the substrate. The allosteric effector GTP functions by stabilizing the protein conformation that binds the tetrahedral intermediate(s) formed during glutamine hydrolysis. Inhibited by the product CTP, via allosteric rather than competitive inhibition. In terms of biological role, catalyzes the ATP-dependent amination of UTP to CTP with either L-glutamine or ammonia as the source of nitrogen. Regulates intracellular CTP levels through interactions with the four ribonucleotide triphosphates. The protein is CTP synthase of Erwinia tasmaniensis (strain DSM 17950 / CFBP 7177 / CIP 109463 / NCPPB 4357 / Et1/99).